A 324-amino-acid polypeptide reads, in one-letter code: Pseudouridine-5'-phosphate glycosidase (324 aa).

The Proton donor role is filled by glutamate 43. Substrate is bound by residues lysine 104 and valine 124. Residue aspartate 156 participates in Mn(2+) binding. Residue 158-160 coordinates substrate; it reads SAD. Lysine 177 serves as the catalytic Nucleophile.

Belongs to the pseudouridine-5'-phosphate glycosidase family. In terms of assembly, homotrimer. The cofactor is Mn(2+).

The enzyme catalyses D-ribose 5-phosphate + uracil = psi-UMP + H2O. Functionally, catalyzes the reversible cleavage of pseudouridine 5'-phosphate (PsiMP) to ribose 5-phosphate and uracil. Functions biologically in the cleavage direction, as part of a pseudouridine degradation pathway. In Salinispora tropica (strain ATCC BAA-916 / DSM 44818 / JCM 13857 / NBRC 105044 / CNB-440), this protein is Pseudouridine-5'-phosphate glycosidase.